A 264-amino-acid chain; its full sequence is MKQYIKLIKKIIRVGNQKKDRTGTGTLSIFGYNMKFDLKKGFPLLTTKKCHIASIIYELLWFLKGDTNIAYLNENKISIWNNWANESGDVGPIYGKQWRNWSTPEGHEIDQIKNVLIQLKKNPDSRRMLVSSWNVGDIDKMRLPPCHVLFQFYVFNNTLSCQLYQRSCDVFLGLPFNIASYSILIHMIAQQCDLKVGDFLWTGGDVHLYNNHIELAKKQILRIPRTLPKLTILKKPQSLFQYCFEDFKIIGYHPYPAIKGEISI.

Arginine 21 is a dUMP binding site. Histidine 51 is a (6R)-5,10-methylene-5,6,7,8-tetrahydrofolate binding site. Position 126-127 (126-127 (RR)) interacts with dUMP. Cysteine 146 (nucleophile) is an active-site residue. DUMP-binding positions include 166–169 (RSCD), asparagine 177, and 207–209 (HLY). Residue aspartate 169 participates in (6R)-5,10-methylene-5,6,7,8-tetrahydrofolate binding. A (6R)-5,10-methylene-5,6,7,8-tetrahydrofolate-binding site is contributed by serine 263.

Belongs to the thymidylate synthase family. Bacterial-type ThyA subfamily. Homodimer.

The protein localises to the cytoplasm. The catalysed reaction is dUMP + (6R)-5,10-methylene-5,6,7,8-tetrahydrofolate = 7,8-dihydrofolate + dTMP. Its pathway is pyrimidine metabolism; dTTP biosynthesis. In terms of biological role, catalyzes the reductive methylation of 2'-deoxyuridine-5'-monophosphate (dUMP) to 2'-deoxythymidine-5'-monophosphate (dTMP) while utilizing 5,10-methylenetetrahydrofolate (mTHF) as the methyl donor and reductant in the reaction, yielding dihydrofolate (DHF) as a by-product. This enzymatic reaction provides an intracellular de novo source of dTMP, an essential precursor for DNA biosynthesis. This Buchnera aphidicola subsp. Acyrthosiphon pisum (strain Tuc7) protein is Thymidylate synthase.